The primary structure comprises 146 residues: Flagellar assembly factor FliW (146 aa).

The protein belongs to the FliW family. Interacts with translational regulator CsrA and flagellin(s).

The protein localises to the cytoplasm. Functionally, acts as an anti-CsrA protein, binds CsrA and prevents it from repressing translation of its target genes, one of which is flagellin. Binds to flagellin and participates in the assembly of the flagellum. This chain is Flagellar assembly factor FliW, found in Shouchella clausii (strain KSM-K16) (Alkalihalobacillus clausii).